The sequence spans 84 residues: Esculentin-1ISb (84 aa).

The N-terminal stretch at 1–22 (MFTLKKPLLLIVLLGIISLSLC) is a signal peptide. A propeptide spans 23 to 36 (EQERAADEDEGTKI) (removed in mature form). Residues C78 and C84 are joined by a disulfide bond.

Expressed by the skin glands.

The protein localises to the secreted. In terms of biological role, has antimicrobial activity against Gram-negative bacterium E.coli ATCC 8739 (MIC=3.1 ug), against Gram positive bacteria S.aureus ATCC 6538 (MIC=3.1 ug), methicillin-resistant S.aureus ATCC 43300 (MIC=12.5 ug), B.subtilis ATCC 6633 (MIC=12.5 ug) and against fungus C.albicans ATCC 90028 (MIC=50 ug). This Odorrana ishikawae (Ishikawa's frog) protein is Esculentin-1ISb.